The sequence spans 793 residues: E3 UFM1-protein ligase 1 (793 aa).

At Ala-2 the chain carries N-acetylalanine. A mediates interaction with DDRGK1 region spans residues 2-200; sequence ADAWEEIRRL…RGLFSAITRP (199 aa). The interval 2–212 is required for E3 UFM1-protein ligase activity; the sequence is ADAWEEIRRL…VNSLISKYGF (211 aa). Residues 121 to 250 form an involved in CDK5RAP3-binding region; it reads DRLAEEVNDK…KAVFVPDIYS (130 aa). A mediates interaction with TRIP4 region spans residues 200–400; the sequence is PTAVNSLISK…NPVHLITEED (201 aa). Residues 407–473 are disordered; it reads LESVSTSKKD…SSHTGKKKPE (67 aa). Arg-433 is subject to Omega-N-methylarginine. Residue Ser-458 is modified to Phosphoserine. A mediates interaction with CDK5RAP3 region spans residues 490–684; sequence IQDAPEEFIS…QLKVTEDPAL (195 aa). Thr-536 is subject to Phosphothreonine.

The protein belongs to the UFL1 family. Catalytic component of the UFM1 ribosome E3 ligase (UREL) complex, composed of UFL1, DDRGK1 and CDK5RAP3. Interacts with E2-like enzyme UFC1. Interacts with RELA. Interacts with NBN; promoting recruitment to double-strand breaks following DNA damage. Interacts (when phosphorylated) with YWHAG/14-3-3-gamma; sequestering UFL1 and preventing its association with PDCD1/PD-1 substrate. In terms of processing, ubiquitinated, leading to its degradation by the proteasome. Interaction with CDK5RAP3 protects both proteins against ubiquitination and degradation via the proteasome. Phosphorylation at Thr-536 by AMPK promotes its interaction with YWHAG/14-3-3-gamma, thereby preventing UFL1 association with PDCD1/PD-1 substrate.

It localises to the endoplasmic reticulum membrane. The protein resides in the cytoplasm. Its subcellular location is the cytosol. It is found in the nucleus. The protein localises to the chromosome. Its function is as follows. E3 protein ligase that mediates ufmylation, the covalent attachment of the ubiquitin-like modifier UFM1 to lysine residues on target proteins, and which plays a key role in various processes, such as ribosome recycling, response to DNA damage, interferon response or reticulophagy (also called ER-phagy). Catalyzes ufmylation of many protein, such as CD274/PD-L1, CDK5RAP3, CYB5R3, DDRGK1, EIF6, histone H4, MRE11, P4HB, PDCD1/PD-1, TRIP4, RPN1, RPS20/uS10, RPL10/uL16, RPL26/uL24, SYVN1/HRD1 and TP53/p53. As part of the UREL complex, plays a key role in ribosome recycling by catalyzing mono-ufmylation of RPL26/uL24 subunit of the 60S ribosome. Ufmylation of RPL26/uL24 occurs on free 60S ribosomes following ribosome dissociation: it weakens the junction between post-termination 60S subunits and SEC61 translocons, promoting release and recycling of the large ribosomal subunit from the endoplasmic reticulum membrane. Ufmylation of RPL26/uL24 and subsequent 60S ribosome recycling either take place after normal termination of translation or after ribosome stalling during cotranslational translocation at the endoplasmic reticulum. Involved in reticulophagy in response to endoplasmic reticulum stress by mediating ufmylation of proteins such as CYB5R3 and RPN1, thereby promoting lysosomal degradation of ufmylated proteins. Ufmylation in response to endoplasmic reticulum stress is essential for processes such as hematopoiesis, blood vessel morphogenesis or inflammatory response. Mediates ufmylation of DDRGK1 and CDK5RAP3; the role of these modifications is however unclear: as both DDRGK1 and CDK5RAP3 act as substrate adapters for ufmylation, it is uncertain whether ufmylation of these proteins is, a collateral effect or is required for ufmylation. Acts as a negative regulator of T-cell activation by mediating ufmylation and stabilization of PDCD1/PD-1. Also involved in the response to DNA damage: recruited to double-strand break sites following DNA damage and mediates monoufmylation of histone H4 and ufmylation of MRE11. Mediates ufmylation of TP53/p53, promoting its stability. Catalyzes ufmylation of TRIP4, thereby playing a role in nuclear receptor-mediated transcription. Required for hematopoietic stem cell function and hematopoiesis. This is E3 UFM1-protein ligase 1 from Macaca fascicularis (Crab-eating macaque).